The primary structure comprises 128 residues: Small ribosomal subunit protein bS6 (128 aa).

Belongs to the bacterial ribosomal protein bS6 family.

In terms of biological role, binds together with bS18 to 16S ribosomal RNA. This Leifsonia xyli subsp. xyli (strain CTCB07) protein is Small ribosomal subunit protein bS6.